The primary structure comprises 327 residues: MTRRPPRFWLRPTRSIAARLLRPFSFIATTLTRRRLRQPTFHASVPVLCCGNITTGGTGKTPLTLDLVQRLRDRGHHPHILSRGHGGRERGPIGVNPNRSTPRDVGDEPLLLAQSAPTWIGADRAETARLAISQGADCLVMDDGFQNPTLHQDVSVLVVDGVTGFGNGCVLPAGPLREPVPDALARAQAVVVMGDDRHNLIPTFPPHLLTAQARLVPGPEIRTLQGRRIVAFAGIGRPEKFFDMLRDAGVAPIRSLPFPDHHFYTPRDIQRLEALSRESGTTLVTTAKDAVKLPFPFRTQVKVIGVELLWADPKSPERLLDLLFSAS.

An ATP-binding site is contributed by 54–61 (TTGGTGKT). The segment at 78–106 (PHILSRGHGGRERGPIGVNPNRSTPRDVG) is disordered.

It belongs to the LpxK family.

It carries out the reaction a lipid A disaccharide + ATP = a lipid IVA + ADP + H(+). It participates in glycolipid biosynthesis; lipid IV(A) biosynthesis; lipid IV(A) from (3R)-3-hydroxytetradecanoyl-[acyl-carrier-protein] and UDP-N-acetyl-alpha-D-glucosamine: step 6/6. Its function is as follows. Transfers the gamma-phosphate of ATP to the 4'-position of a tetraacyldisaccharide 1-phosphate intermediate (termed DS-1-P) to form tetraacyldisaccharide 1,4'-bis-phosphate (lipid IVA). This is Tetraacyldisaccharide 4'-kinase from Gluconobacter oxydans (strain 621H) (Gluconobacter suboxydans).